A 595-amino-acid chain; its full sequence is Solute carrier family 13 member 1 (595 aa).

The next 5 helical transmembrane spans lie at 13 to 33 (FLLV…IRSK), 40 to 60 (ILFV…ITAL), 77 to 97 (VASA…CLAT), 113 to 133 (VMMV…STAF), and 134 to 154 (LSMW…VEAV). N174 is a glycosylation site (N-linked (GlcNAc...) asparagine). Residues 190 to 218 (QETNERKEKTKPALGSSNDKGKVSSKMET) are disordered. Residues 208–218 (DKGKVSSKMET) show a composition bias toward basic and acidic residues. The next 8 membrane-spanning stretches (helical) occupy residues 239 to 259 (LMCL…ITGT), 283 to 303 (SWFL…WIWL), 348 to 368 (IVTL…DPGF), 381 to 401 (GYVT…LIPA), 464 to 484 (PLGS…VTSL), 491 to 511 (PATI…IHVN), 512 to 532 (PLHI…LPVA), and 553 to 573 (AGLG…FTWI). N591 carries an N-linked (GlcNAc...) asparagine glycan.

This sequence belongs to the SLC13A/DASS transporter (TC 2.A.47) family. NADC subfamily. As to expression, kidney and intestine.

The protein resides in the apical cell membrane. The catalysed reaction is sulfate(out) + 3 Na(+)(out) = sulfate(in) + 3 Na(+)(in). It catalyses the reaction selenate(out) + 3 Na(+)(out) = selenate(in) + 3 Na(+)(in). The enzyme catalyses thiosulfate(out) + 3 Na(+)(out) = thiosulfate(in) + 3 Na(+)(in). Its function is as follows. Sodium:sulfate symporter that mediates sulfate reabsorption in the kidney and small intestine. Can also mediate the transport of selenate and thiosulfate. The chain is Solute carrier family 13 member 1 (Slc13a1) from Rattus norvegicus (Rat).